The sequence spans 264 residues: Type III pantothenate kinase 2 (264 aa).

6–13 (DVGNTFTV) provides a ligand contact to ATP. Substrate contacts are provided by residues Tyr-100 and 107–110 (GADR). Asp-109 (proton acceptor) is an active-site residue. Asp-129 lines the K(+) pocket. ATP is bound at residue Thr-132. Thr-184 serves as a coordination point for substrate.

The protein belongs to the type III pantothenate kinase family. As to quaternary structure, homodimer. The cofactor is NH4(+). K(+) is required as a cofactor.

The protein localises to the cytoplasm. The catalysed reaction is (R)-pantothenate + ATP = (R)-4'-phosphopantothenate + ADP + H(+). The protein operates within cofactor biosynthesis; coenzyme A biosynthesis; CoA from (R)-pantothenate: step 1/5. In terms of biological role, catalyzes the phosphorylation of pantothenate (Pan), the first step in CoA biosynthesis. This is Type III pantothenate kinase 2 from Symbiobacterium thermophilum (strain DSM 24528 / JCM 14929 / IAM 14863 / T).